The following is a 339-amino-acid chain: Fructose-1,6-bisphosphatase class 1 (339 aa).

Mg(2+) is bound by residues glutamate 94, aspartate 116, leucine 118, and aspartate 119. Residues aspartate 119–serine 122, asparagine 210, and lysine 276 each bind substrate. A Mg(2+)-binding site is contributed by glutamate 282.

The protein belongs to the FBPase class 1 family. In terms of assembly, homotetramer. Mg(2+) is required as a cofactor.

It localises to the cytoplasm. The enzyme catalyses beta-D-fructose 1,6-bisphosphate + H2O = beta-D-fructose 6-phosphate + phosphate. The protein operates within carbohydrate biosynthesis; gluconeogenesis. This is Fructose-1,6-bisphosphatase class 1 from Burkholderia ambifaria (strain MC40-6).